The sequence spans 122 residues: Small ribosomal subunit protein uS13 (122 aa).

Positions R91–K122 are disordered.

Belongs to the universal ribosomal protein uS13 family. As to quaternary structure, part of the 30S ribosomal subunit. Forms a loose heterodimer with protein S19. Forms two bridges to the 50S subunit in the 70S ribosome.

In terms of biological role, located at the top of the head of the 30S subunit, it contacts several helices of the 16S rRNA. In the 70S ribosome it contacts the 23S rRNA (bridge B1a) and protein L5 of the 50S subunit (bridge B1b), connecting the 2 subunits; these bridges are implicated in subunit movement. Contacts the tRNAs in the A and P-sites. The protein is Small ribosomal subunit protein uS13 of Kocuria rhizophila (strain ATCC 9341 / DSM 348 / NBRC 103217 / DC2201).